A 40-amino-acid chain; its full sequence is Antifungal protein ginkbilobin-1 (40 aa).

A Gnk2-homologous domain is found at 3 to 40 (TAFVSSAHNTQKIPAGAPFNRNLRAMLADLRQNAAFAG). Position 11 (N11) interacts with alpha-D-mannopyranose.

In terms of tissue distribution, expressed in seeds (at the protein level).

Functionally, possesses antifungal activity against B.cinerea, M.arachidicola, F.oxysporum, R.solani and C.comatus and moderate antibacterial activity against S.aureus, P.aeruginosa and E.coli. Inhibits HIV-1 reverse transcriptase and proliferation of murine splenocytes. Exerts antifungal activity through its carbohydrate-binding specificity. The chain is Antifungal protein ginkbilobin-1 from Ginkgo biloba (Ginkgo).